The following is a 217-amino-acid chain: 3,4-dihydroxy-2-butanone 4-phosphate synthase (217 aa).

D-ribulose 5-phosphate is bound by residues 37-38 (RE), aspartate 42, 150-154 (RRGHT), and glutamate 174. Glutamate 38 contributes to the Mg(2+) binding site. Histidine 153 contacts Mg(2+).

This sequence belongs to the DHBP synthase family. Homodimer. Mg(2+) serves as cofactor. Requires Mn(2+) as cofactor.

The enzyme catalyses D-ribulose 5-phosphate = (2S)-2-hydroxy-3-oxobutyl phosphate + formate + H(+). It participates in cofactor biosynthesis; riboflavin biosynthesis; 2-hydroxy-3-oxobutyl phosphate from D-ribulose 5-phosphate: step 1/1. Its function is as follows. Catalyzes the conversion of D-ribulose 5-phosphate to formate and 3,4-dihydroxy-2-butanone 4-phosphate. In Yersinia enterocolitica serotype O:8 / biotype 1B (strain NCTC 13174 / 8081), this protein is 3,4-dihydroxy-2-butanone 4-phosphate synthase.